The chain runs to 438 residues: MSAVKKALDLMKAEEVEYVDIRFCDPRGKLQHVTLIADLVDEDFFEEGFMFDGSSIAGWKSIDQSDMKLIPDASSVYIDPFYAEKTMCVHCNVVEPDTAEAYSRDPRIALKAEAYLKASGIGDVAYFGPEAEFFIFDDVRYSVTPAKVAYQIDAEAAAWNTDAEVEMGNLAHRAGHKGGYFPVNPVDEAQDLRGEMLSTMKRMGMKVDKHHHEVATCQHELGLIFGGLTEQADNILKYKYVIHNVAHAYGKTVTFMPKPMKGDNGSGMHVNMSIWKDGKPLFAGDKYADLSQEALYFIGGILKHAKALNALTNPGTNSYKRLIPGFEAPVLRAYSARNRSGCVRIPWTESPKAKRVEARFPDPSANPYLAFAALLMAGLDGIKNKIDPGPASDKDLYDLPPEELAAIPTVCGSLREALTELEKDHDFLLAGDVFTKDQ.

The region spanning 14–98 is the GS beta-grasp domain; sequence EEVEYVDIRF…VHCNVVEPDT (85 aa). A GS catalytic domain is found at 106–438; sequence PRIALKAEAY…LAGDVFTKDQ (333 aa). The Mg(2+) site is built by Glu130 and Glu132. An ATP-binding site is contributed by Asp208. 2 residues coordinate Mg(2+): Glu213 and Glu220. L-glutamate-binding positions include 264-265 and Gly265; that span reads NG. His269 provides a ligand contact to Mg(2+). ATP-binding positions include 271 to 273 and Ser273; that span reads NMS. The L-glutamate site is built by Arg321, Glu327, and Arg339. Residues Arg339, Arg344, and Lys352 each contribute to the ATP site. Glu357 is a Mg(2+) binding site. Arg359 serves as a coordination point for L-glutamate. Position 397 is an O-AMP-tyrosine (Tyr397).

This sequence belongs to the glutamine synthetase family. Oligomer of 12 subunits arranged in the form of two hexameric ring. Mg(2+) serves as cofactor.

The protein resides in the cytoplasm. It carries out the reaction L-glutamate + NH4(+) + ATP = L-glutamine + ADP + phosphate + H(+). With respect to regulation, the activity of this enzyme could be controlled by adenylation under conditions of abundant glutamine. Functionally, catalyzes the ATP-dependent biosynthesis of glutamine from glutamate and ammonia. This chain is Glutamine synthetase, found in Rhodobacter capsulatus (Rhodopseudomonas capsulata).